We begin with the raw amino-acid sequence, 473 residues long: PPE family protein PPE37 (473 aa).

Residues 203-206 (DFLE) carry the Iron-binding motif motif. 2 helical membrane-spanning segments follow: residues 227–247 (VLDW…AYLV) and 250–270 (PLIY…PAGL).

The protein belongs to the mycobacterial PPE family.

Its subcellular location is the cell membrane. Its function is as follows. Essential for efficient heme-iron acquisition (HIA). Binds iron. Strains with a functional PPE37 can utilize low concentrations of hemin very efficiently in broth and on agar plates. During infection, might interfere with the pro-inflammatory cytokine response in infected macrophages. In terms of biological role, in vitro, incubation of the protein in the presence of M.tuberculosis proteases leads to the cleavage of PPE37 into two segments, the N- and C-terminal segments. Transfection of human monocytic THP-1 cell lines with the N-terminal segment leads to the proliferation and differentiation of THP-1 cells into adherent stellate cells with dendritic cell-like morphology. Transfection of THP-1 cells with the C-terminal segment leads to the apoptosis of the cells. Recombinant protein antigens display strong B-cell response in tuberculosis patients and immunized mice. This is PPE family protein PPE37 from Mycobacterium tuberculosis (strain ATCC 25618 / H37Rv).